The sequence spans 267 residues: Undecaprenyl-diphosphatase (267 aa).

8 consecutive transmembrane segments (helical) span residues 1–21 (MSYFEAFILALIQGLTEFLPI), 39–59 (QGLAFDVAVHVGTLMAVVIYF), 83–103 (AKLAWMIVIATIPACVFGLLM), 111–131 (LRSAYVIATTTIIFGLLLWWV), 144–164 (TGWKKALFIGIAQALAMIPGT), 189–209 (FLMSIPIITLAGGYLGMKLVT), 218–238 (FLLTGIVTSFISAYICIHFFL), and 246–266 (MTPFVIYRLILGFGLFAFLLM).

This sequence belongs to the UppP family.

The protein resides in the cell inner membrane. It catalyses the reaction di-trans,octa-cis-undecaprenyl diphosphate + H2O = di-trans,octa-cis-undecaprenyl phosphate + phosphate + H(+). Catalyzes the dephosphorylation of undecaprenyl diphosphate (UPP). Confers resistance to bacitracin. The chain is Undecaprenyl-diphosphatase from Vibrio campbellii (strain ATCC BAA-1116).